The following is a 152-amino-acid chain: MIALIQRVKRADVQVGERTTGEIGAGLLALVCAERGDTEAAADKLLAKLLGYRVFSDAAGKMNLPVSNIDGAGRAGGLLLVSQFTLAADTNSGLRPSFTPAAPPEEGKRLFDYFVAAARERHPIVETGEFGADMQVSLVNDGPVTFWLQVRP.

The Gly-cisPro motif, important for rejection of L-amino acids motif lies at 142 to 143 (GP).

This sequence belongs to the DTD family. Homodimer.

Its subcellular location is the cytoplasm. The catalysed reaction is glycyl-tRNA(Ala) + H2O = tRNA(Ala) + glycine + H(+). It carries out the reaction a D-aminoacyl-tRNA + H2O = a tRNA + a D-alpha-amino acid + H(+). An aminoacyl-tRNA editing enzyme that deacylates mischarged D-aminoacyl-tRNAs. Also deacylates mischarged glycyl-tRNA(Ala), protecting cells against glycine mischarging by AlaRS. Acts via tRNA-based rather than protein-based catalysis; rejects L-amino acids rather than detecting D-amino acids in the active site. By recycling D-aminoacyl-tRNA to D-amino acids and free tRNA molecules, this enzyme counteracts the toxicity associated with the formation of D-aminoacyl-tRNA entities in vivo and helps enforce protein L-homochirality. This chain is D-aminoacyl-tRNA deacylase, found in Burkholderia vietnamiensis (strain G4 / LMG 22486) (Burkholderia cepacia (strain R1808)).